We begin with the raw amino-acid sequence, 454 residues long: tRNA modification GTPase MnmE (454 aa).

The (6S)-5-formyl-5,6,7,8-tetrahydrofolate site is built by Arg-23, Glu-80, and Lys-120. One can recognise a TrmE-type G domain in the interval 216-377 (GMKVVIAGRP…LRNHLKQSMG (162 aa)). A K(+)-binding site is contributed by Asn-226. GTP contacts are provided by residues 226 to 231 (NAGKSS), 245 to 251 (TDIAGTT), 270 to 273 (DTAG), 335 to 338 (NKAD), and 358 to 360 (SAR). Ser-230 contributes to the Mg(2+) binding site. K(+) is bound by residues Thr-245, Ile-247, and Thr-250. Position 251 (Thr-251) interacts with Mg(2+). Lys-454 lines the (6S)-5-formyl-5,6,7,8-tetrahydrofolate pocket.

The protein belongs to the TRAFAC class TrmE-Era-EngA-EngB-Septin-like GTPase superfamily. TrmE GTPase family. In terms of assembly, homodimer. Heterotetramer of two MnmE and two MnmG subunits. It depends on K(+) as a cofactor.

The protein resides in the cytoplasm. Exhibits a very high intrinsic GTPase hydrolysis rate. Involved in the addition of a carboxymethylaminomethyl (cmnm) group at the wobble position (U34) of certain tRNAs, forming tRNA-cmnm(5)s(2)U34. The chain is tRNA modification GTPase MnmE from Klebsiella pneumoniae subsp. pneumoniae (strain ATCC 700721 / MGH 78578).